Reading from the N-terminus, the 57-residue chain is Benzylsuccinate synthase gamma subunit (57 aa).

Heterohexamer composed of 2 alpha subunits, 2 beta subunits and 2 gamma subunits.

It carries out the reaction toluene + fumarate = 2-benzylsuccinate. Its pathway is xenobiotic degradation; toluene degradation. With respect to regulation, activated by the benzylsuccinate synthase activating enzyme BssD. Rapidly inactivated by oxygen. Its function is as follows. Catalyzes the addition of fumarate to the methyl group of toluene, leading to the formation of benzylsuccinate. This is Benzylsuccinate synthase gamma subunit (bssC) from Thauera aromatica.